Consider the following 343-residue polypeptide: Glyceraldehyde-3-phosphate dehydrogenase (343 aa).

Residues 13-14 (TI) and G111 each bind NAD(+). 140–142 (SCN) lines the D-glyceraldehyde 3-phosphate pocket. The active-site Nucleophile is the C141. R169 contacts NAD(+). 195–196 (HA) lines the D-glyceraldehyde 3-phosphate pocket. An NAD(+)-binding site is contributed by Q302.

This sequence belongs to the glyceraldehyde-3-phosphate dehydrogenase family. In terms of assembly, homotetramer.

It localises to the cytoplasm. The catalysed reaction is D-glyceraldehyde 3-phosphate + phosphate + NADP(+) = (2R)-3-phospho-glyceroyl phosphate + NADPH + H(+). It carries out the reaction D-glyceraldehyde 3-phosphate + phosphate + NAD(+) = (2R)-3-phospho-glyceroyl phosphate + NADH + H(+). The protein operates within carbohydrate degradation; glycolysis; pyruvate from D-glyceraldehyde 3-phosphate: step 1/5. In Hyperthermus butylicus (strain DSM 5456 / JCM 9403 / PLM1-5), this protein is Glyceraldehyde-3-phosphate dehydrogenase.